We begin with the raw amino-acid sequence, 402 residues long: MMKALVIEDIKVITTAPEGINLVAVKVTTNDPSIYGVGCATFTQRYEVVVTAIDKYLKPFLIGKDPQRIEDIWRTASVSSYWRNGPVLNNALSGIDMALWDIKGKLANMPLYQLFGGKVRDAVPAYIHADAQSVSDAVELVQTRVDQGWKQIRVQIGGYGGNNQAMHLPKDNTPGVYYDPDVYMKTMIEGFEKLREKFGDSIKLCHDVHERLSPSEAVKFANQLEKFDLLFLEDALPPEQVQWFEHLRSHTNIPLAMGELFNNPHEWTGLIQNRTIDYLRLHLSQVGGITPTRKIISLADAYGVRTAWHGPGDMTGIGHAVNTHLSITSTNFGIQEWSCSIKENTYKVFPGTPVAKDGYIYLNDQPGIGVDIDEEAAAAFPTHDRMADWTLCRLPDGSAGRP.

Asp207 lines the Mg(2+) pocket. Residue His209 participates in D-arabinonate binding. Mg(2+)-binding residues include Glu233 and Glu259. Residues Glu259, Arg280, His309, and Glu336 each coordinate D-arabinonate.

It belongs to the mandelate racemase/muconate lactonizing enzyme family. GalD subfamily.

Its function is as follows. Has no detectable activity with D-mannonate and with a panel of 70 other acid sugars (in vitro), in spite of the conservation of the residues that are expected to be important for catalytic activity and cofactor binding. May have evolved a divergent function. The sequence is that of D-galactonate dehydratase family member EGBG_02030 from Enterococcus gallinarum (strain EG2).